The following is a 363-amino-acid chain: tRNA/tmRNA (uracil-C(5))-methyltransferase (363 aa).

Residues Gln-187, Tyr-215, Asn-220, Glu-236, and Asp-296 each contribute to the S-adenosyl-L-methionine site. Cys-321 functions as the Nucleophile in the catalytic mechanism. Catalysis depends on Glu-355, which acts as the Proton acceptor.

Belongs to the class I-like SAM-binding methyltransferase superfamily. RNA M5U methyltransferase family. TrmA subfamily.

The catalysed reaction is uridine(54) in tRNA + S-adenosyl-L-methionine = 5-methyluridine(54) in tRNA + S-adenosyl-L-homocysteine + H(+). It catalyses the reaction uridine(341) in tmRNA + S-adenosyl-L-methionine = 5-methyluridine(341) in tmRNA + S-adenosyl-L-homocysteine + H(+). Functionally, dual-specificity methyltransferase that catalyzes the formation of 5-methyluridine at position 54 (m5U54) in all tRNAs, and that of position 341 (m5U341) in tmRNA (transfer-mRNA). In Pseudomonas aeruginosa (strain ATCC 15692 / DSM 22644 / CIP 104116 / JCM 14847 / LMG 12228 / 1C / PRS 101 / PAO1), this protein is tRNA/tmRNA (uracil-C(5))-methyltransferase.